A 226-amino-acid chain; its full sequence is Orotidine 5'-phosphate decarboxylase (226 aa).

Residues Asp-8, Lys-30, 58–67 (DLKIHDIPNT), Thr-117, Arg-177, Gln-186, Gly-206, and Arg-207 contribute to the substrate site. Lys-60 acts as the Proton donor in catalysis.

This sequence belongs to the OMP decarboxylase family. Type 1 subfamily. As to quaternary structure, homodimer.

The catalysed reaction is orotidine 5'-phosphate + H(+) = UMP + CO2. Its pathway is pyrimidine metabolism; UMP biosynthesis via de novo pathway; UMP from orotate: step 2/2. Functionally, catalyzes the decarboxylation of orotidine 5'-monophosphate (OMP) to uridine 5'-monophosphate (UMP). In Campylobacter jejuni subsp. doylei (strain ATCC BAA-1458 / RM4099 / 269.97), this protein is Orotidine 5'-phosphate decarboxylase.